The chain runs to 194 residues: MSGVLIAVAALLALAAVFGAVLGFASEKFKVEGDPIVDQIDSLLPQTQCGQCGHPGCRPYAEAIAEGEEHNRCPPGGQDTVVALSELLGREELTLDDEGAEDANVAKVAYIREDECIGCTKCIQACPVDAIVGAAKLMHTVIVDECTGCDLCVEPCPVDCIDMLEVKPTLQTWGWQRPAGIGERPDSRIEVVNL.

Residues 1–26 (MSGVLIAVAALLALAAVFGAVLGFAS) are hydrophobic. Residues 32 to 90 (EGDPIVDQIDSLLPQTQCGQCGHPGCRPYAEAIAEGEEHNRCPPGGQDTVVALSELLGR) form the 4Fe-4S domain. Residues Cys49, Cys52, Cys57, Cys73, Cys116, Cys119, Cys122, Cys126, Cys146, Cys149, Cys152, and Cys156 each coordinate [4Fe-4S] cluster. 2 consecutive 4Fe-4S ferredoxin-type domains span residues 107 to 136 (KVAY…GAAK) and 137 to 166 (LMHT…MLEV).

Belongs to the 4Fe4S bacterial-type ferredoxin family. RnfB subfamily. As to quaternary structure, the complex is composed of six subunits: RnfA, RnfB, RnfC, RnfD, RnfE and RnfG. Requires [4Fe-4S] cluster as cofactor.

The protein localises to the cell inner membrane. In terms of biological role, part of a membrane-bound complex that couples electron transfer with translocation of ions across the membrane. The chain is Ion-translocating oxidoreductase complex subunit B from Alcanivorax borkumensis (strain ATCC 700651 / DSM 11573 / NCIMB 13689 / SK2).